The chain runs to 176 residues: Large ribosomal subunit protein uL6 (176 aa).

Belongs to the universal ribosomal protein uL6 family. As to quaternary structure, part of the 50S ribosomal subunit.

This protein binds to the 23S rRNA, and is important in its secondary structure. It is located near the subunit interface in the base of the L7/L12 stalk, and near the tRNA binding site of the peptidyltransferase center. The chain is Large ribosomal subunit protein uL6 from Methanosarcina mazei (strain ATCC BAA-159 / DSM 3647 / Goe1 / Go1 / JCM 11833 / OCM 88) (Methanosarcina frisia).